A 220-amino-acid polypeptide reads, in one-letter code: 5-hmdU DNA kinase 1 (220 aa).

Belongs to the thymidylate kinase family. 5-hmdU DNA kinase subfamily.

It catalyses the reaction 5-hydroxymethyl-dUMP in DNA + ATP = 5-phosphomethyl-dUMP in DNA + ADP + H(+). Phosphorylates 5-hydroxymethyluracil (5hmdU) into 5-phosphomethyl-2'-deoxyuridine (5- PmdU) on DNA as a step in the pathway leading to thymidine hypermodifications in the viral genome. The phosphate is added internally to the DNA polymer. As a final result of the pathway of hypermodification, 5-aminoethoxy-2'-deoxymethyluridine (5-NeOmdU) substitutes for about 40% of the thymidines in the viral DNA. These modifications probably prevent degradation of viral genome by the host restriction-modification antiviral defense system. The chain is 5-hmdU DNA kinase 1 from Salmonella phage ViI.